We begin with the raw amino-acid sequence, 210 residues long: Fibroblast growth factor 21 (210 aa).

Positions 1–28 (MEWMRSRVGTLGLWVRLLLAVFLLGVYQ) are cleaved as a signal peptide. Residues 144 to 210 (PLRLPQKDSP…LQGRSPSYAS (67 aa)) are disordered.

The protein belongs to the heparin-binding growth factors family. In terms of assembly, interacts (via C-terminus) with KLB; this interaction is direct. Interacts with FGFR4. As to expression, most abundantly expressed in the liver, also expressed in the thymus at lower levels. Expressed in skeletal muscle (at protein level). Secreted in plasma (at protein level).

It is found in the secreted. Functionally, stimulates glucose uptake in differentiated adipocytes via the induction of glucose transporter SLC2A1/GLUT1 expression (but not SLC2A4/GLUT4 expression). Activity probably requires the presence of KLB. Regulates systemic glucose homeostasis and insulin sensitivity. The protein is Fibroblast growth factor 21 (Fgf21) of Mus musculus (Mouse).